We begin with the raw amino-acid sequence, 335 residues long: Ig gamma-2A chain C region secreted form (335 aa).

3 consecutive Ig-like domains span residues P6–E98, P126–S225, and P234–S330. Residue N185 is glycosylated (N-linked (GlcNAc...) asparagine).

The protein resides in the secreted. The polypeptide is Ig gamma-2A chain C region secreted form (Mus musculus (Mouse)).